A 184-amino-acid chain; its full sequence is Threonylcarbamoyl-AMP synthase (184 aa).

Positions 1–184 (MNNLENIVEQ…IFTQHIFRQG (184 aa)) constitute a YrdC-like domain.

This sequence belongs to the SUA5 family. TsaC subfamily.

The protein localises to the cytoplasm. It carries out the reaction L-threonine + hydrogencarbonate + ATP = L-threonylcarbamoyladenylate + diphosphate + H2O. Functionally, required for the formation of a threonylcarbamoyl group on adenosine at position 37 (t(6)A37) in tRNAs that read codons beginning with adenine. Catalyzes the conversion of L-threonine, HCO(3)(-)/CO(2) and ATP to give threonylcarbamoyl-AMP (TC-AMP) as the acyladenylate intermediate, with the release of diphosphate. The chain is Threonylcarbamoyl-AMP synthase from Actinobacillus pleuropneumoniae serotype 7 (strain AP76).